The following is a 468-amino-acid chain: MNKGKIKQIIGSVMDISFESGNMPEIYNAVEIQTKVNGKDVTITAEVQQHIGDNTVRAISLQSTDGLKRGLEVTDTGIPISVPVGTKTLGRIFNVLGEAIDELGDLPKDVKKMPIHRNAPTYEEIKPKTEIFETGIKVIDLLAPYIKGGKTGLFGGAGVGKTVLIQELINNIAKQHGGFSVFAGVGERTREGNDLWNEMKESGVIDKTVLCFGQMNEPPGARLRVALSALTMAENFRDESGSDILLFVDNIFRFSQAGSEVSALLGRMPSAVGYQPTLSTEMGGLQERITSTTRGSITSVQAIYVPADDLTDPAPATAFTHLDATTVLSRAISEKGIYPAVDPLDSTSRIMNPQIVGEEHYSTAREVQRILQRYKDLQDIIAILGMDELSEDDKILVARARRLEKFLSQPFHVAEQFTGRPGKYVKLEDTIRSFKGIIEGKYDSLPEQAFYMVGSIDEVIEAAKQLKG.

155–162 is an ATP binding site; sequence GGAGVGKT.

It belongs to the ATPase alpha/beta chains family. F-type ATPases have 2 components, CF(1) - the catalytic core - and CF(0) - the membrane proton channel. CF(1) has five subunits: alpha(3), beta(3), gamma(1), delta(1), epsilon(1). CF(0) has three main subunits: a(1), b(2) and c(9-12). The alpha and beta chains form an alternating ring which encloses part of the gamma chain. CF(1) is attached to CF(0) by a central stalk formed by the gamma and epsilon chains, while a peripheral stalk is formed by the delta and b chains.

The protein localises to the cell inner membrane. The enzyme catalyses ATP + H2O + 4 H(+)(in) = ADP + phosphate + 5 H(+)(out). Produces ATP from ADP in the presence of a proton gradient across the membrane. The catalytic sites are hosted primarily by the beta subunits. The protein is ATP synthase subunit beta of Leptospira biflexa serovar Patoc (strain Patoc 1 / ATCC 23582 / Paris).